We begin with the raw amino-acid sequence, 236 residues long: 2-C-methyl-D-erythritol 4-phosphate cytidylyltransferase (236 aa).

This sequence belongs to the IspD/TarI cytidylyltransferase family. IspD subfamily. As to quaternary structure, homodimer.

The catalysed reaction is 2-C-methyl-D-erythritol 4-phosphate + CTP + H(+) = 4-CDP-2-C-methyl-D-erythritol + diphosphate. It functions in the pathway isoprenoid biosynthesis; isopentenyl diphosphate biosynthesis via DXP pathway; isopentenyl diphosphate from 1-deoxy-D-xylulose 5-phosphate: step 2/6. Functionally, catalyzes the formation of 4-diphosphocytidyl-2-C-methyl-D-erythritol from CTP and 2-C-methyl-D-erythritol 4-phosphate (MEP). The sequence is that of 2-C-methyl-D-erythritol 4-phosphate cytidylyltransferase from Escherichia coli O127:H6 (strain E2348/69 / EPEC).